The primary structure comprises 362 residues: MERIVVTLGERSYPITIASGLFNEPASFLPLKSGEQVMLVTNETLAPLYLDKVRGVLEQAGVNVDSVILPDGEQYKSLAVLDTVFTALLQKPHGRDTTLVALGGGVVGDLTGFAAASYQRGVRFIQVPTTLLSQVDSSVGGKTAVNHPLGKNMIGAFYQPASVVVDLDCLKTLPPRELASGLAEVIKYGIILDGAFFNWLEENLDALLRLDGPAMAYCIRRCCELKAEVVAADERETGLRALLNLGHTFGHAIEAEMGYGNWLHGEAVAAGMVMAARTSERLGQFSSAETQRIITLLTRAGLPVNGPREMSAQAYLPHMLRDKKVLAGEMRLILPLAIGKSEVRSGVSHELVLNAIADCQSA.

NAD(+) contacts are provided by residues 71 to 76 (DGEQYK), 105 to 109 (GVVGD), 129 to 130 (TT), K142, K151, and 169 to 172 (CLKT). E184, H247, and H264 together coordinate Zn(2+).

This sequence belongs to the sugar phosphate cyclases superfamily. Dehydroquinate synthase family. Co(2+) serves as cofactor. It depends on Zn(2+) as a cofactor. NAD(+) is required as a cofactor.

Its subcellular location is the cytoplasm. The enzyme catalyses 7-phospho-2-dehydro-3-deoxy-D-arabino-heptonate = 3-dehydroquinate + phosphate. It participates in metabolic intermediate biosynthesis; chorismate biosynthesis; chorismate from D-erythrose 4-phosphate and phosphoenolpyruvate: step 2/7. Catalyzes the conversion of 3-deoxy-D-arabino-heptulosonate 7-phosphate (DAHP) to dehydroquinate (DHQ). The sequence is that of 3-dehydroquinate synthase from Escherichia coli O127:H6 (strain E2348/69 / EPEC).